The chain runs to 290 residues: Metallo-beta-lactamase L1 type 3 (290 aa).

The first 21 residues, 1-21 (MRSTLLAFALAVALPAAHTSA), serve as a signal peptide directing secretion. Positions 22 to 33 (AEVPLPQLRAYT) are excised as a propeptide. Zn(2+) contacts are provided by H105, H107, D109, H110, and H181. D205 is a substrate binding site. Cysteines 239 and 267 form a disulfide. H246 serves as a coordination point for Zn(2+).

It belongs to the metallo-beta-lactamase superfamily. Class-B beta-lactamase family. In terms of assembly, homotetramer. It depends on Zn(2+) as a cofactor.

It localises to the periplasm. The catalysed reaction is a beta-lactam + H2O = a substituted beta-amino acid. Inhibited by Hg(2+) or Cu(2+), and by chelating agents such as EDTA and O-phenanthroline. Reduced enzymatic activity in presence of cobalt, nickel, cadmium, and manganese. In terms of biological role, confers resistance to the different beta-lactams antibiotics (penicillin, cephalosporin and carbapenem) via the hydrolysis of the beta-lactam ring. The protein is Metallo-beta-lactamase L1 type 3 of Stenotrophomonas maltophilia (Pseudomonas maltophilia).